The primary structure comprises 387 residues: Protein salvador homolog 1 (387 aa).

Phosphoserine occurs at positions 95 and 138. WW domains lie at 201–234 (LPLP…HPLE) and 236–269 (EGLP…HPCA). Threonine 212 is subject to Phosphothreonine. An SARAH domain is found at 323–370 (ILKWELFQLADLDTYQGMLKLLFMKELEQIVKLYEAYRQALVTELENR).

In terms of assembly, homodimer. Stabilized through interaction with STK3/MST2 or STK4/MST1. Interacts (via SARAH domain) with isoform 1 of NEK2. Interacts with ESR1 only in the presence of STK3/MST2. Interacts with WTIP and AJUBA. Post-translationally, phosphorylated by STK3/MST2 and STK4/MST1. Phosphorylation is not required for SAV1 stability and may increase the number of protein binding sites on the scaffold molecule.

It localises to the nucleus. The protein resides in the cytoplasm. Its function is as follows. Regulator of STK3/MST2 and STK4/MST1 in the Hippo signaling pathway which plays a pivotal role in organ size control and tumor suppression by restricting proliferation and promoting apoptosis. The core of this pathway is composed of a kinase cascade wherein STK3/MST2 and STK4/MST1, in complex with its regulatory protein SAV1, phosphorylates and activates LATS1/2 in complex with its regulatory protein MOB1, which in turn phosphorylates and inactivates YAP1 oncoprotein and WWTR1/TAZ. Phosphorylation of YAP1 by LATS1/2 inhibits its translocation into the nucleus to regulate cellular genes important for cell proliferation, cell death, and cell migration. SAV1 is required for STK3/MST2 and STK4/MST1 activation and promotes cell-cycle exit and terminal differentiation in developing epithelial tissues. Plays a role in centrosome disjunction by regulating the localization of NEK2 to centrosomes, and its ability to phosphorylate CROCC and CEP250. In conjunction with STK3/MST2, activates the transcriptional activity of ESR1 through the modulation of its phosphorylation. This chain is Protein salvador homolog 1, found in Rattus norvegicus (Rat).